Here is a 109-residue protein sequence, read N- to C-terminus: Nucleoid-associated protein LGAS_0369 (109 aa).

Belongs to the YbaB/EbfC family. In terms of assembly, homodimer.

The protein resides in the cytoplasm. Its subcellular location is the nucleoid. Functionally, binds to DNA and alters its conformation. May be involved in regulation of gene expression, nucleoid organization and DNA protection. This chain is Nucleoid-associated protein LGAS_0369, found in Lactobacillus gasseri (strain ATCC 33323 / DSM 20243 / BCRC 14619 / CIP 102991 / JCM 1131 / KCTC 3163 / NCIMB 11718 / NCTC 13722 / AM63).